The sequence spans 596 residues: Elongation factor 4 (596 aa).

The region spanning 2-184 (KNIRNFSIIA…TIVKNIPSPA (183 aa)) is the tr-type G domain. GTP-binding positions include 14 to 19 (DHGKST) and 131 to 134 (NKID).

Belongs to the TRAFAC class translation factor GTPase superfamily. Classic translation factor GTPase family. LepA subfamily.

The protein localises to the cell inner membrane. The enzyme catalyses GTP + H2O = GDP + phosphate + H(+). Its function is as follows. Required for accurate and efficient protein synthesis under certain stress conditions. May act as a fidelity factor of the translation reaction, by catalyzing a one-codon backward translocation of tRNAs on improperly translocated ribosomes. Back-translocation proceeds from a post-translocation (POST) complex to a pre-translocation (PRE) complex, thus giving elongation factor G a second chance to translocate the tRNAs correctly. Binds to ribosomes in a GTP-dependent manner. This is Elongation factor 4 from Colwellia psychrerythraea (strain 34H / ATCC BAA-681) (Vibrio psychroerythus).